A 315-amino-acid polypeptide reads, in one-letter code: Energy-coupling factor transporter ATP-binding protein EcfA2 (315 aa).

An ABC transporter domain is found at 31–275; the sequence is IILDNVSYTY…QELLSKIQIE (245 aa). 68–75 lines the ATP pocket; the sequence is GTTGSGKS.

The protein belongs to the ABC transporter superfamily. Energy-coupling factor EcfA family. As to quaternary structure, forms a stable energy-coupling factor (ECF) transporter complex composed of 2 membrane-embedded substrate-binding proteins (S component), 2 ATP-binding proteins (A component) and 2 transmembrane proteins (T component).

It is found in the cell membrane. Its function is as follows. ATP-binding (A) component of a common energy-coupling factor (ECF) ABC-transporter complex. Unlike classic ABC transporters this ECF transporter provides the energy necessary to transport a number of different substrates. The chain is Energy-coupling factor transporter ATP-binding protein EcfA2 from Mesoplasma florum (strain ATCC 33453 / NBRC 100688 / NCTC 11704 / L1) (Acholeplasma florum).